The primary structure comprises 206 residues: Ras-related protein Rab-14 (206 aa).

15–22 is a GTP binding site; it reads GDMGVGKS. Residues 37–45 carry the Effector region motif; it reads SPHTIGVEF. Residues 63–67 and 121–124 each bind GTP; these read DTAGQ and NKKD. The tract at residues 182–206 is disordered; sequence PDGGITKNPPQTITDKPQDASKCSC. Polar residues predominate over residues 189–206; sequence NPPQTITDKPQDASKCSC. Residues C204 and C206 are each lipidated (S-geranylgeranyl cysteine). C206 carries the post-translational modification Cysteine methyl ester.

The protein belongs to the small GTPase superfamily. Rab family.

The protein localises to the endosome. It is found in the contractile vacuole. It localises to the membrane. It catalyses the reaction GTP + H2O = GDP + phosphate + H(+). Rab activation is generally mediated by a guanine exchange factor (GEF), while inactivation through hydrolysis of bound GTP is catalyzed by a GTPase activating protein (GAP). That Rab is activated by the DENND6A and DENND6B guanine exchange factors (GEF). Functionally, the small GTPases Rab are key regulators of intracellular membrane trafficking, from the formation of transport vesicles to their fusion with membranes. Rabs cycle between an inactive GDP-bound form and an active GTP-bound form that is able to recruit to membranes different set of downstream effectors directly responsible for vesicle formation, movement, tethering and fusion. Regulates the fusion of phagosomes and lysosomes. The polypeptide is Ras-related protein Rab-14 (rab14) (Dictyostelium discoideum (Social amoeba)).